Here is a 246-residue protein sequence, read N- to C-terminus: Dehydration-responsive element-binding protein 1H (246 aa).

The segment at 1 to 43 (MDMAGHEVNSSSSSSGAESSSSSSGRQQYKKRPAGRTKFRETR) is disordered. The span at 10 to 24 (SSSSSSGAESSSSSS) shows a compositional bias: low complexity. Basic residues predominate over residues 28 to 37 (QYKKRPAGRT). The segment at residues 46–110 (VYRGVRRRGG…GGGAACLNFQ (65 aa)) is a DNA-binding region (AP2/ERF). A disordered region spans residues 155-187 (AMDEATSGVSAPPPLANNAGSSETPGPSSIDGT). Residues 172–181 (NAGSSETPGP) show a composition bias toward polar residues.

The protein belongs to the AP2/ERF transcription factor family. ERF subfamily.

The protein resides in the nucleus. Its function is as follows. Transcriptional activator that binds specifically to the DNA sequence 5'-[AG]CCGAC-3'. Binding to the C-repeat/DRE element mediates high salinity- and dehydration-inducible transcription. In Oryza sativa subsp. indica (Rice), this protein is Dehydration-responsive element-binding protein 1H (DREB1H).